Here is a 197-residue protein sequence, read N- to C-terminus: MACQIQASRVFPVLEIEKGLSFMINVFHRRIKASSITLTSFPYPMKSFQIRRPNRKIAFALDTGSSIPGDSGEGQEMNGDRTGLGSTRLGRIAIAGGKQLLGKINSARKNFPMKIFLLLLGFYTANALATILGQTGDWDVLVAGIVVAAIEGIGMLMYKKPSSSMFSGKLQSFVVFMNFWKAGVCLGLFVDAFKLGS.

Helical transmembrane passes span 113–133 (MKIFLLLLGFYTANALATILG), 138–158 (WDVLVAGIVVAAIEGIGMLMY), and 173–193 (FVVFMNFWKAGVCLGLFVDAF).

Belongs to the ycf20 family.

It is found in the membrane. The sequence is that of Ycf20-like protein from Arabidopsis thaliana (Mouse-ear cress).